We begin with the raw amino-acid sequence, 660 residues long: UvrABC system protein C (660 aa).

Positions 16–95 (ESPGVYRFRD…IKQYDPRFNV (80 aa)) constitute a GIY-YIG domain. In terms of domain architecture, UVR spans 208-243 (DAMVRRLEREMAEASAELEFERAARLRDDLAALRRA). Residues 469-501 (GEAGVESAGDPDAPAGPDAPDEPRVGTLVDPTT) are disordered. A compositionally biased stretch (low complexity) spans 476–486 (AGDPDAPAGPD).

Belongs to the UvrC family. As to quaternary structure, interacts with UvrB in an incision complex.

The protein localises to the cytoplasm. Its function is as follows. The UvrABC repair system catalyzes the recognition and processing of DNA lesions. UvrC both incises the 5' and 3' sides of the lesion. The N-terminal half is responsible for the 3' incision and the C-terminal half is responsible for the 5' incision. This Salinispora arenicola (strain CNS-205) protein is UvrABC system protein C.